A 1141-amino-acid chain; its full sequence is Envelopment polyprotein (1141 aa).

A signal peptide spans 1 to 19 (MFCLCLSLLGLLLCWPAAT). Topologically, residues 20-489 (RNLLELKVEC…CVPGLHGWAT (470 aa)) are lumenal. 6 cysteine pairs are disulfide-bonded: Cys-29–Cys-154, Cys-63–Cys-160, Cys-112–Cys-131, Cys-136–Cys-141, Cys-178–Cys-188, and Cys-213–Cys-252. An N-linked (GlcNAc...) asparagine; by host glycan is attached at Asn-137. Asn-352 carries an N-linked (GlcNAc...) asparagine; by host glycan. 4 cysteine pairs are disulfide-bonded: Cys-381–Cys-440, Cys-385–Cys-394, Cys-410–Cys-429, and Cys-457–Cys-480. A glycan (N-linked (GlcNAc...) asparagine; by host) is linked at Asn-404. A helical transmembrane segment spans residues 490 to 510 (ISLLITFCFGWLAIPLLSMII). At 511–632 (IRFLLIFTYL…LSMFRYKSKC (122 aa)) the chain is on the cytoplasmic side. The tract at residues 521-538 (CSKYSTDSKFKLIIEKVK) is binding to the ribonucleoprotein. 2 consecutive CCHC-type zinc fingers follow at residues 550–570 (CEVCQQGCETAKELESHKKSC) and 575–596 (CPYCLNPTEATESALQAHFKVC). Binding to the ribonucleoprotein regions lie at residues 593-610 (FKVCKLTTRFQENLKKSL), 597-608 (KLTTRFQENLKK), and 616-630 (KRGLYRTLSMFRYKS). The inhibition of interferon induction stretch occupies residues 612–653 (TYEPKRGLYRTLSMFRYKSKCYVGLVWCILLTMELIVWAASA). The region spanning 616–639 (KRGLYRTLSMFRYKSKCYVGLVWC) is the ITAM domain. Phosphotyrosine is present on residues Tyr-620 and Tyr-633. Positions 620-623 (YRTL) match the YxxL motif. The helical transmembrane segment at 633 to 653 (YVGLVWCILLTMELIVWAASA) threads the bilayer. The Lumenal portion of the chain corresponds to 654–1109 (ETINLEPGWT…EWLLGILSGN (456 aa)). Disulfide bonds link Cys-740–Cys-775, Cys-744–Cys-782, Cys-756–Cys-889, Cys-770–Cys-900, Cys-785–Cys-908, Cys-811–Cys-820, Cys-828–Cys-837, and Cys-868–Cys-872. A fusion loop region spans residues 762 to 782 (FEFETGWGCNPPDCPGVGTGC). Asn-932 carries N-linked (GlcNAc...) asparagine; by host glycosylation. 5 disulfides stabilise this stretch: Cys-974-Cys-1004, Cys-997-Cys-1049, Cys-1014-Cys-1019, Cys-1050-Cys-1055, and Cys-1089-Cys-1093. The chain crosses the membrane as a helical span at residues 1110–1130 (WMVVAVLIALFIFSLLLFSLC). A binding to the ribonucleoprotein region spans residues 1126-1141 (LFSLCCPRRQNYKKNK). Residues 1131 to 1141 (CPRRQNYKKNK) lie on the Cytoplasmic side of the membrane.

This sequence belongs to the hantavirus envelope glycoprotein family. As to quaternary structure, homodimer. Homotetramer; forms heterotetrameric Gn-Gc spikes in the pre-fusion conformation. Interacts (via C-terminus) with the nucleoprotein. Interacts with host TUFM; this interaction contributes to the virus-induced degradation of mitochondria by autophagy, which leads to degradation of host MAVS and inhibition of type I interferon (IFN) responses. Interacts with host MAP1LC3B; this interaction contributes to the virus-induced degradation of mitochondria by autophagy, which leads to degradation of host MAVS and inhibition of type I interferon (IFN) responses. Homodimer. Homotetramer; forms heterotetrameric Gn-Gc spikes in the pre-fusion conformation. Homotrimer; forms homotrimer in the post-fusion conformation at acidic pH. Interacts (via C-terminus) with the nucleoprotein. In terms of processing, envelope polyprotein precursor is quickly cleaved in vivo just after synthesis, presumably by host signal peptidase.

The protein resides in the virion membrane. It localises to the host cell surface. Its subcellular location is the host Golgi apparatus membrane. It is found in the host endoplasmic reticulum membrane. The protein localises to the host mitochondrion. Its function is as follows. Forms homotetramers with glycoprotein C at the surface of the virion. Attaches the virion to host cell receptors including integrin alpha5/ITGB1. This attachment induces virion internalization predominantly through clathrin-dependent endocytosis. Mediates the assembly and budding of infectious virus particles through its interaction with the nucleocapsid protein and the viral genome. May dysregulate normal immune and endothelial cell responses through an ITAM motif. Translocates to mitochondria, binds to host TUFM and recruits MAP1LC3B. These interactions induce mitochondrial autophagy and therefore destruction of host MAVS leading to inhibition of type I interferon (IFN) responses. Concomitant breakdown of glycoprotein N is apparently prevented by the nucleoprotein that may inhibit Gn-stimulated autophagosome-lysosome fusion. Interacts with the viral genomic RNA. Inhibits the host RIG-I/TBK1 pathway by disrupting the formation of TBK1-TRAF3 complexes and downstream signaling responses required for IFN-beta transcription. Forms homotetramers with glycoprotein N at the surface of the virion. Attaches the virion to host cell receptors including integrin ITGAV/ITGB3. This attachment induces virion internalization predominantly through clathrin-dependent endocytosis. Class II fusion protein that promotes fusion of viral membrane with host endosomal membrane after endocytosis of the virion. This is Envelopment polyprotein (GP) from Tula orthohantavirus (TULV).